Consider the following 34-residue polypeptide: Photosystem II reaction center protein M (34 aa).

A helical transmembrane segment spans residues 5-25 (ILAFIATALFVLIPTAFLIIL).

This sequence belongs to the PsbM family. In terms of assembly, PSII is composed of 1 copy each of membrane proteins PsbA, PsbB, PsbC, PsbD, PsbE, PsbF, PsbH, PsbI, PsbJ, PsbK, PsbL, PsbM, PsbT, PsbX, PsbY, PsbZ, Psb30/Ycf12, at least 3 peripheral proteins of the oxygen-evolving complex and a large number of cofactors. It forms dimeric complexes.

Its subcellular location is the plastid. It localises to the chloroplast thylakoid membrane. In terms of biological role, one of the components of the core complex of photosystem II (PSII). PSII is a light-driven water:plastoquinone oxidoreductase that uses light energy to abstract electrons from H(2)O, generating O(2) and a proton gradient subsequently used for ATP formation. It consists of a core antenna complex that captures photons, and an electron transfer chain that converts photonic excitation into a charge separation. This subunit is found at the monomer-monomer interface. This is Photosystem II reaction center protein M from Zygnema circumcarinatum (Green alga).